Reading from the N-terminus, the 282-residue chain is 2-dehydro-3-deoxyphosphooctonate aldolase (282 aa).

The protein belongs to the KdsA family.

It localises to the cytoplasm. The enzyme catalyses D-arabinose 5-phosphate + phosphoenolpyruvate + H2O = 3-deoxy-alpha-D-manno-2-octulosonate-8-phosphate + phosphate. The protein operates within carbohydrate biosynthesis; 3-deoxy-D-manno-octulosonate biosynthesis; 3-deoxy-D-manno-octulosonate from D-ribulose 5-phosphate: step 2/3. It participates in bacterial outer membrane biogenesis; lipopolysaccharide biosynthesis. The polypeptide is 2-dehydro-3-deoxyphosphooctonate aldolase (Shewanella amazonensis (strain ATCC BAA-1098 / SB2B)).